The following is a 263-amino-acid chain: 4-hydroxy-2-oxo-heptane-1,7-dioate aldolase (263 aa).

The active-site Proton acceptor is His45. Gln147 lines the substrate pocket. Glu149 is a binding site for a divalent metal cation. Residues Ala174 and Asp175 each contribute to the substrate site. Asp175 contributes to the a divalent metal cation binding site.

It belongs to the HpcH/HpaI aldolase family. As to quaternary structure, homohexamer; trimer of dimers. A divalent metal cation is required as a cofactor.

The catalysed reaction is 4-hydroxy-2-oxoheptanedioate = succinate semialdehyde + pyruvate. It participates in aromatic compound metabolism; 4-hydroxyphenylacetate degradation; pyruvate and succinate semialdehyde from 4-hydroxyphenylacetate: step 7/7. Functionally, catalyzes the reversible retro-aldol cleavage of 4-hydroxy-2-ketoheptane-1,7-dioate (HKHD) to pyruvate and succinic semialdehyde. In Salmonella arizonae (strain ATCC BAA-731 / CDC346-86 / RSK2980), this protein is 4-hydroxy-2-oxo-heptane-1,7-dioate aldolase.